Reading from the N-terminus, the 712-residue chain is Polyribonucleotide nucleotidyltransferase (712 aa).

Aspartate 487 and aspartate 493 together coordinate Mg(2+). Residues 554 to 613 (PKIITMTINPDKIRDVIGPSGKQINKIIEETGVKIDIEQDGTVFISSINQEMNDKAKKII) form the KH domain. Residues 623–691 (GEIYEGKVKR…KQGRVNLSRK (69 aa)) enclose the S1 motif domain.

This sequence belongs to the polyribonucleotide nucleotidyltransferase family. It depends on Mg(2+) as a cofactor.

The protein resides in the cytoplasm. It catalyses the reaction RNA(n+1) + phosphate = RNA(n) + a ribonucleoside 5'-diphosphate. In terms of biological role, involved in mRNA degradation. Catalyzes the phosphorolysis of single-stranded polyribonucleotides processively in the 3'- to 5'-direction. The sequence is that of Polyribonucleotide nucleotidyltransferase from Bacillus anthracis.